The sequence spans 211 residues: Large ribosomal subunit protein uL3 (211 aa).

Glutamine 150 carries the post-translational modification N5-methylglutamine.

This sequence belongs to the universal ribosomal protein uL3 family. As to quaternary structure, part of the 50S ribosomal subunit. Forms a cluster with proteins L14 and L19. Post-translationally, methylated by PrmB.

One of the primary rRNA binding proteins, it binds directly near the 3'-end of the 23S rRNA, where it nucleates assembly of the 50S subunit. The sequence is that of Large ribosomal subunit protein uL3 from Pseudomonas fluorescens (strain ATCC BAA-477 / NRRL B-23932 / Pf-5).